A 568-amino-acid polypeptide reads, in one-letter code: MASPALISETEAWKDLKAHVEDIKRTHLRELMGDTERCQSMMVEFDNIFLDYSRQQASPDTINKLYKLADAAHLKQKIDRMYNGDHINSTENRSVLHVALRAPRNSAICSDGKNVVPDVWNVLDKIKDFSERVRNGSWVGATGKELKDVIAVGIGGSFLGPLFVHTALQTDPEASKNARGRELRFLANVDPIDAARNISGLDPETTLVVVVSKTFTTAETMLNARTLREWISSALGPSAVAKHMVAVSTNLPLVEKFGIDPNNAFAFWDWVGGRYSVCSAVGVLPLSLQYGFAVVEKFLQGAHNIDQHFSSAPFEKNIPVLLGLLSVWNVSFLGYPARAILPYSQALEKLAPHIQQVSMESNGKGVSIDGLPLPFESGEIDFGEPGTNGQHSFYQLIHQGRVIPCDFIGVVKSQQPVYLKGEVVNNHDELMSNFFAQPDALAYGKTPEQLKKENVSEHLIPHKTFTGNRPSVSILLPTLDAYRIGQLLAIYEHRVAVQGFIWGINSFDQWGVELGKSLATQVRKQLHASRVKGESVEGFNFSTKTLLTRYLEATSDVPAAPSTLLPKI.

The active-site Proton donor is the Glu-360. Catalysis depends on residues His-391 and Lys-516.

Belongs to the GPI family. In terms of assembly, homodimer.

Its subcellular location is the cytoplasm. It catalyses the reaction alpha-D-glucose 6-phosphate = beta-D-fructose 6-phosphate. It functions in the pathway carbohydrate degradation; glycolysis; D-glyceraldehyde 3-phosphate and glycerone phosphate from D-glucose: step 2/4. This chain is Glucose-6-phosphate isomerase, cytosolic (PGIC), found in Oenothera sinuata var. hirsuta (Mexican evening primrose).